The sequence spans 541 residues: Chaperonin GroEL (541 aa).

ATP contacts are provided by residues 29 to 32 (TAGP), K50, 86 to 90 (DGTTT), G416, and D498.

This sequence belongs to the chaperonin (HSP60) family. As to quaternary structure, forms a cylinder of 14 subunits composed of two heptameric rings stacked back-to-back. Interacts with the co-chaperonin GroES.

The protein localises to the cytoplasm. It carries out the reaction ATP + H2O + a folded polypeptide = ADP + phosphate + an unfolded polypeptide.. In terms of biological role, together with its co-chaperonin GroES, plays an essential role in assisting protein folding. The GroEL-GroES system forms a nano-cage that allows encapsulation of the non-native substrate proteins and provides a physical environment optimized to promote and accelerate protein folding. The protein is Chaperonin GroEL of Anaplasma phagocytophilum (Ehrlichia phagocytophila).